A 201-amino-acid chain; its full sequence is Ran-specific GTPase-activating protein 1 (201 aa).

2 stretches are compositionally biased toward basic and acidic residues: residues 1-17 and 32-66; these read MSSE…EEAA and KKAE…IHFE. The disordered stretch occupies residues 1–66; sequence MSSEDKKPVV…APESPDIHFE (66 aa). A Phosphoserine modification is found at Ser-60. In terms of domain architecture, RanBD1 spans 64–200; that stretch reads HFEPVVHLEK…FEKAQEINKK (137 aa).

Belongs to the RANBP1 family. In terms of assembly, interacts with GSP1 and PRP20.

Its subcellular location is the cytoplasm. It is found in the nucleus. In terms of biological role, important for the export of protein containing nuclear export signal (NES) out of the nucleus. Stimulates the GTPase activity of GSP1 and GSP2. The protein is Ran-specific GTPase-activating protein 1 (YRB1) of Saccharomyces cerevisiae (strain ATCC 204508 / S288c) (Baker's yeast).